A 505-amino-acid polypeptide reads, in one-letter code: Deoxyguanosinetriphosphate triphosphohydrolase (505 aa).

One can recognise an HD domain in the interval 66–273; it reads RLTHSMEVQQ…MEAADDISYC (208 aa).

Belongs to the dGTPase family. Type 1 subfamily. As to quaternary structure, homotetramer. Mg(2+) serves as cofactor.

It carries out the reaction dGTP + H2O = 2'-deoxyguanosine + triphosphate + H(+). In terms of biological role, dGTPase preferentially hydrolyzes dGTP over the other canonical NTPs. The protein is Deoxyguanosinetriphosphate triphosphohydrolase of Salmonella enteritidis PT4 (strain P125109).